The following is a 390-amino-acid chain: Telobox protein 1 (390 aa).

The tract at residues 30 to 57 (ENPSKREVAQDVPGFERKPTKVRKPRVK) is disordered. The segment covering 32–48 (PSKREVAQDVPGFERKP) has biased composition (basic and acidic residues). HTH myb-type domains lie at 50–109 (KVRK…PEDY) and 135–193 (STRK…PERY). A DNA-binding region (H-T-H motif) is located at residues 78-105 (WKKILLDERFHFTNRSPNDLKDRFRTIL). The segment at 115 to 143 (NAKTHMGRPQKIPHTVGLSKSTRKERKQF) is disordered. Residues 162-189 (WTRISKDANLGLQNRRSTDLRDRFRNAF) constitute a DNA-binding region (H-T-H motif). Composition is skewed to polar residues over residues 244 to 257 (SNPN…TEQP) and 322 to 340 (ISPS…SIQQ). Disordered regions lie at residues 244 to 278 (SNPN…FTSQ) and 316 to 390 (QPPS…DNRG). Residues 347 to 360 (PPLSSNTLNSSTLP) show a composition bias toward low complexity.

It localises to the nucleus. In terms of biological role, general transcription factor with prominent roles in controlling histone levels and stability. Binds and regulates the activities of many promoters, including those controlling the expression of all four types of canonical histones. Is also involved in the centromeric loading of cnp1 and maintenance of centromere identity. Moreover, regulates the expression of cdc2, a protease capable of histone clipping. The chain is Telobox protein 1 from Schizosaccharomyces pombe (strain 972 / ATCC 24843) (Fission yeast).